We begin with the raw amino-acid sequence, 65 residues long: Small ribosomal subunit protein bS21 (65 aa).

Belongs to the bacterial ribosomal protein bS21 family.

The chain is Small ribosomal subunit protein bS21 from Chlorobium chlorochromatii (strain CaD3).